The following is a 700-amino-acid chain: Elongation factor G (700 aa).

The 283-residue stretch at 8–290 (ERYRNIGISA…AVVEYLPSPV (283 aa)) folds into the tr-type G domain. Residues 17-24 (AHIDAGKT), 88-92 (DTPGH), and 142-145 (NKMD) contribute to the GTP site.

Belongs to the TRAFAC class translation factor GTPase superfamily. Classic translation factor GTPase family. EF-G/EF-2 subfamily.

It localises to the cytoplasm. Its function is as follows. Catalyzes the GTP-dependent ribosomal translocation step during translation elongation. During this step, the ribosome changes from the pre-translocational (PRE) to the post-translocational (POST) state as the newly formed A-site-bound peptidyl-tRNA and P-site-bound deacylated tRNA move to the P and E sites, respectively. Catalyzes the coordinated movement of the two tRNA molecules, the mRNA and conformational changes in the ribosome. In Mannheimia succiniciproducens (strain KCTC 0769BP / MBEL55E), this protein is Elongation factor G.